The chain runs to 149 residues: Large ribosomal subunit protein eL19 (149 aa).

A disordered region spans residues 45-130; that stretch reads VDEGAIQAKD…RDLYDKAGGG (86 aa). A compositionally biased stretch (basic residues) spans 58–85; the sequence is NSRGRARERQKKRAYGHQKGAGSRKGKA. Residues 90–113 are compositionally biased toward basic and acidic residues; it reads NSKEDWESRIRAQRTKLRELRDEG.

The protein belongs to the eukaryotic ribosomal protein eL19 family. Part of the 50S ribosomal subunit.

Binds to the 23S rRNA. Located at the polypeptide exit tunnel on the outside of the subunit. This chain is Large ribosomal subunit protein eL19, found in Haloarcula marismortui (strain ATCC 43049 / DSM 3752 / JCM 8966 / VKM B-1809) (Halobacterium marismortui).